Here is a 153-residue protein sequence, read N- to C-terminus: Riboflavin synthase (153 aa).

It belongs to the DMRL synthase family. As to quaternary structure, homooligomer. The cofactor is Mg(2+).

It catalyses the reaction 2 6,7-dimethyl-8-(1-D-ribityl)lumazine + H(+) = 5-amino-6-(D-ribitylamino)uracil + riboflavin. It participates in cofactor biosynthesis; riboflavin biosynthesis; riboflavin from 2-hydroxy-3-oxobutyl phosphate and 5-amino-6-(D-ribitylamino)uracil: step 2/2. With respect to regulation, inhibited by EDTA. The relatively low activity of this enzyme suggested that 6,7-dimethyl-8-ribityllumazine might not be its natural substrate. The chain is Riboflavin synthase (ribC) from Methanothermobacter marburgensis (strain ATCC BAA-927 / DSM 2133 / JCM 14651 / NBRC 100331 / OCM 82 / Marburg) (Methanobacterium thermoautotrophicum).